We begin with the raw amino-acid sequence, 417 residues long: 3-isopropylmalate dehydratase large subunit 2 (417 aa).

Cys-298, Cys-358, and Cys-361 together coordinate [4Fe-4S] cluster.

Belongs to the aconitase/IPM isomerase family. LeuC type 2 subfamily. As to quaternary structure, heterodimer of LeuC and LeuD. [4Fe-4S] cluster is required as a cofactor.

The catalysed reaction is (2R,3S)-3-isopropylmalate = (2S)-2-isopropylmalate. It participates in amino-acid biosynthesis; L-leucine biosynthesis; L-leucine from 3-methyl-2-oxobutanoate: step 2/4. Catalyzes the isomerization between 2-isopropylmalate and 3-isopropylmalate, via the formation of 2-isopropylmaleate. The protein is 3-isopropylmalate dehydratase large subunit 2 of Thermotoga maritima (strain ATCC 43589 / DSM 3109 / JCM 10099 / NBRC 100826 / MSB8).